A 327-amino-acid polypeptide reads, in one-letter code: DNA-directed RNA polymerase subunit alpha (327 aa).

The segment at 1–233 (MVREKVKVST…NLFIPFLHVE (233 aa)) is alpha N-terminal domain (alpha-NTD). Positions 267–327 (LAFQYIFIDQ…KKILDILEKK (61 aa)) are alpha C-terminal domain (alpha-CTD).

It belongs to the RNA polymerase alpha chain family. In terms of assembly, in plastids the minimal PEP RNA polymerase catalytic core is composed of four subunits: alpha, beta, beta', and beta''. When a (nuclear-encoded) sigma factor is associated with the core the holoenzyme is formed, which can initiate transcription.

It is found in the plastid. It localises to the chloroplast. The catalysed reaction is RNA(n) + a ribonucleoside 5'-triphosphate = RNA(n+1) + diphosphate. In terms of biological role, DNA-dependent RNA polymerase catalyzes the transcription of DNA into RNA using the four ribonucleoside triphosphates as substrates. This chain is DNA-directed RNA polymerase subunit alpha, found in Crucihimalaya wallichii (Rock-cress).